The primary structure comprises 298 residues: Inosose dehydratase (298 aa).

The protein belongs to the IolE/MocC family. Glutathione serves as cofactor. The cofactor is Co(2+). Mn(2+) is required as a cofactor.

The catalysed reaction is scyllo-inosose = 3D-3,5/4-trihydroxycyclohexane-1,2-dione + H2O. Functionally, catalyzes the dehydration of inosose (2-keto-myo-inositol, 2KMI or 2,4,6/3,5-pentahydroxycyclohexanone) to 3D-(3,5/4)-trihydroxycyclohexane-1,2-dione (D-2,3-diketo-4-deoxy-epi-inositol). The protein is Inosose dehydratase of Erwinia tasmaniensis (strain DSM 17950 / CFBP 7177 / CIP 109463 / NCPPB 4357 / Et1/99).